Reading from the N-terminus, the 103-residue chain is Large ribosomal subunit protein bL21 (103 aa).

It belongs to the bacterial ribosomal protein bL21 family. As to quaternary structure, part of the 50S ribosomal subunit. Contacts protein L20.

In terms of biological role, this protein binds to 23S rRNA in the presence of protein L20. The polypeptide is Large ribosomal subunit protein bL21 (Dechloromonas aromatica (strain RCB)).